The following is a 393-amino-acid chain: S-adenosylmethionine synthase 1 (393 aa).

Position 9 (Glu-9) interacts with Mg(2+). ATP is bound at residue His-15. Glu-43 contributes to the K(+) binding site. L-methionine contacts are provided by Glu-56 and Gln-99. ATP-binding positions include 167-169, 235-238, Asp-246, 252-253, Ala-269, Lys-273, and Lys-277; these read DGK, SGRF, and RK. An L-methionine-binding site is contributed by Asp-246. Lys-277 contributes to the L-methionine binding site.

This sequence belongs to the AdoMet synthase family. Homotetramer. It depends on Mn(2+) as a cofactor. Mg(2+) serves as cofactor. Requires Co(2+) as cofactor. K(+) is required as a cofactor. The cofactor is NH4(+). In terms of tissue distribution, mostly expressed in roots, and, to a lower extent, in hypocotyls and cotyledons.

Its subcellular location is the cytoplasm. The catalysed reaction is L-methionine + ATP + H2O = S-adenosyl-L-methionine + phosphate + diphosphate. The protein operates within amino-acid biosynthesis; S-adenosyl-L-methionine biosynthesis; S-adenosyl-L-methionine from L-methionine: step 1/1. Inhibited by products of SAMS reaction (SAM, Pi, PPi), substrate analogs (cycloleucine and ethionine), and alternative nucleotides (GTP, CTP and ADP). Strongly repressed by PPPi. Functionally, catalyzes the formation of S-adenosylmethionine from methionine and ATP. The reaction comprises two steps that are both catalyzed by the same enzyme: formation of S-adenosylmethionine (AdoMet) and triphosphate, and subsequent hydrolysis of the triphosphate. The chain is S-adenosylmethionine synthase 1 (SAMS1) from Catharanthus roseus (Madagascar periwinkle).